Here is a 441-residue protein sequence, read N- to C-terminus: Zinc finger protein ZIC 3 (441 aa).

The segment at 222–257 adopts a C2H2-type 1; atypical zinc-finger fold; that stretch reads LSCKWLEESPMNRPQKTCDRTFSSMHELVTHMTMEH. The C2H2-type 2; atypical zinc-finger motif lies at 266–293; sequence HICYWEECPRGGKSFKAKYKLVNHIRVH. 3 consecutive C2H2-type zinc fingers follow at residues 299–323, 329–353, and 359–381; these read FPCPFPGCGKIFARSENLKIHKRTH, FKCEFEGCDRRFANSSDRKKHMHVH, and YICKVCDKSYTHPSSLRKHMKVH. The interval 375–441 is disordered; it reads RKHMKVHESQ…LPPNFNEWYV (67 aa). Residues 383-399 show a composition bias toward low complexity; it reads SQGSDSSPAASSGYESA. Polar residues predominate over residues 406–429; the sequence is SANSEEPSKNSSATHQTNNSSHNT.

The protein belongs to the GLI C2H2-type zinc-finger protein family.

The protein resides in the nucleus. The protein localises to the cytoplasm. Functionally, probably acts as a transcriptional activator. May bind to the minimal GLI-consensus sequence 5'-GGGTGGTC-3'. Can determine the ectodermal cell fate and promote the earliest step of neural and neural crest development. Involved in establishing left-right asymmetry in the embryo. This is Zinc finger protein ZIC 3 (zic3) from Xenopus tropicalis (Western clawed frog).